The sequence spans 258 residues: Adenylate kinase (258 aa).

52–57 (GAGKGT) contacts ATP. An NMP region spans residues 72 to 101 (ATGDMLRSQVAKKTELGKEAKKIMDQGGLV). Residues T73, R78, 99-101 (GLV), 128-131 (GFPR), and Q135 contribute to the AMP site. Positions 169–206 (GRLVHPASGRSYHKVFNPPKQEMKDDITGEPLIQRSDD) are LID. ATP is bound by residues R170 and 179–180 (SY). The AMP site is built by R203 and R214. Q242 is an ATP binding site.

Belongs to the adenylate kinase family. AK2 subfamily. Monomer.

It localises to the cytoplasm. It is found in the cytosol. The protein localises to the mitochondrion intermembrane space. The catalysed reaction is AMP + ATP = 2 ADP. Functionally, catalyzes the reversible transfer of the terminal phosphate group between ATP and AMP. Plays an important role in cellular energy homeostasis and in adenine nucleotide metabolism. Adenylate kinase activity is critical for regulation of the phosphate utilization and the AMP de novo biosynthesis pathways. The protein is Adenylate kinase (adk1) of Aspergillus oryzae (strain ATCC 42149 / RIB 40) (Yellow koji mold).